We begin with the raw amino-acid sequence, 97 residues long: Antitoxin YafN (97 aa).

The protein belongs to the phD/YefM antitoxin family. Probably forms a complex with the mRNA interferase YafO which inhibits the mRNA interferase activity.

Its function is as follows. Antitoxin component of a type II toxin-antitoxin (TA) system. Functions as an mRNA interferase antitoxin; overexpression prevents YafO-mediated cessation of cell growth and inhibition of cell proliferation. The chain is Antitoxin YafN (yafN) from Escherichia coli (strain K12).